The sequence spans 362 residues: MKFGNFLLTYQPPQFSQTEVMKWLVKLGRISEECGFDTVWLLEHHFTEFGLLGNPYVAAAYLLGATKKLNVGTAAIVLPTAHPVRQLEEVNLLDQMSKGRFRFGICRGLYNKDFRVFGTDMNNSRALMECWYKLIRNGMTEGYMEADNEHIKFHKVKVLPTAYSQGGAPIYVVAESASTTEWAAQHGLPMILSWIINTNDKKAQIELYNEVAQEYGHDIHNIDHCLSYITSVDHDSMKAKEICRNFLGHWYDSYVNATTIFDDSDKTKGYDFNKGQWRDFVLKGHKNTNRRVDYSYEINPVGTPQECIDIIQTDIDATGISNICCGFEANGTVDEIISSMKLFQSDVMPFLKEKQQFSYYIS.

This sequence belongs to the bacterial luciferase oxidoreductase family. Heterodimer of an alpha and a beta chain.

It carries out the reaction a long-chain fatty aldehyde + FMNH2 + O2 = a long-chain fatty acid + hnu + FMN + H2O + 2 H(+). In terms of biological role, light-emitting reaction in luminous bacteria. In Photorhabdus luminescens (Xenorhabdus luminescens), this protein is Alkanal monooxygenase alpha chain (luxA).